A 323-amino-acid polypeptide reads, in one-letter code: Transaldolase (323 aa).

K131 serves as the catalytic Schiff-base intermediate with substrate.

The protein belongs to the transaldolase family. Type 1 subfamily. In terms of assembly, homodimer.

It is found in the cytoplasm. It catalyses the reaction D-sedoheptulose 7-phosphate + D-glyceraldehyde 3-phosphate = D-erythrose 4-phosphate + beta-D-fructose 6-phosphate. The protein operates within carbohydrate degradation; pentose phosphate pathway; D-glyceraldehyde 3-phosphate and beta-D-fructose 6-phosphate from D-ribose 5-phosphate and D-xylulose 5-phosphate (non-oxidative stage): step 2/3. In terms of biological role, transaldolase is important for the balance of metabolites in the pentose-phosphate pathway. The chain is Transaldolase from Blochmanniella floridana.